We begin with the raw amino-acid sequence, 819 residues long: MSNIQNMSLEDIMGERFGRYSKYIIQERALPDIRDGLKPVQRRILYSMNKDGNTFEKGYRKSAKSVGNIMGNFHPHGDSSIYDAMVRMSQDWKNREILVEMHGNNGSMDGDPPAAMRYTEARLSEIAGYLLQDIEKNTVSFAWNFDDTEKEPTVLPAAFPNLLVNGSSGISAGYATDIPPHNLSEVIDAVVYMIDHPKASLEKLMEFLPGPDFPTGGIIQGADEIKKAYETGKGRVVVRSRTEIEELKGGKQQIIVTEIPYEVNKAVLVKKIDDVRVNNKVPGIVEVRDESDRTGLRIAIELKKEADSQTILNYLLKYTDLQVNYNFNMVAIDHFTPRQVGLQKILSSYISHRKDIIIERSKFDKAKAEKRLHIVEGLIRVLSILDEIIALIRSSDNKADAKENLKVSYDFSEEQAEAIVTLQLYRLTNTDIVTLQNEENDLRDLITTLSAIIGDEATMYNVMKRELREVKKKFANPRLSELQAESQIIEIDTASLIAEEETFVSVTRGGYLKRTSPRSFNASSLEEVGKRDDDELIFVKQAKTTEHLLLFTTLGNVIYRPIHELTDLRWKDIGEHLSQTISNFATEEEILYADIVTSFDQGLYVAVTQNGFIKRFDRKELSPWRTYKSKSTKYVKLKDDKDRVVTLSPVIMEDLLLVTKNGYALRFSSQEVPIQGLKSAGVKGINLKNDDSLASAFAVTSNSFFVLTQRGSLKRMAVDDIPQTSRANRGLLVLRELKTKPHRVFLAGGVQSDTSAEQFDLFTDIPEEETNQQMLEVISKTGQTYEIALETLSLSERTSNGSFISDTISDQEVLVARTR.

Residues 30-496 form the Topo IIA-type catalytic domain; the sequence is LPDIRDGLKP…QIIEIDTASL (467 aa). The active-site O-(5'-phospho-DNA)-tyrosine intermediate is the Y118.

Belongs to the type II topoisomerase GyrA/ParC subunit family. ParC type 2 subfamily. Heterotetramer composed of ParC and ParE.

It is found in the cell membrane. The enzyme catalyses ATP-dependent breakage, passage and rejoining of double-stranded DNA.. Functionally, topoisomerase IV is essential for chromosome segregation. It relaxes supercoiled DNA. Performs the decatenation events required during the replication of a circular DNA molecule. In Streptococcus pyogenes serotype M3 (strain ATCC BAA-595 / MGAS315), this protein is DNA topoisomerase 4 subunit A.